Reading from the N-terminus, the 159-residue chain is MSDEEHQFESKADAGASKTYPQQAGTIRKNGHIVIKGRPCKVVEVSTSKTGKHGHAKCHFVAIDIFTGKKLEDIVPSSHNCDVPHVNRTDYQLIDISEDGFVSLLTENGNTKDDLRLPTDDNLLTQIKDGFAEGKDLVVSVMSAMGEEQICALKDIGPK.

Basic and acidic residues predominate over residues 1–12 (MSDEEHQFESKA). A disordered region spans residues 1-23 (MSDEEHQFESKADAGASKTYPQQ). Lysine 52 is subject to Hypusine.

This sequence belongs to the eIF-5A family. Lys-52 undergoes hypusination, a unique post-translational modification that consists in the addition of a butylamino group from spermidine to lysine side chain, leading to the formation of the unusual amino acid hypusine. eIF-5As are the only known proteins to undergo this modification, which is essential for their function.

In terms of biological role, translation factor that promotes translation elongation and termination, particularly upon ribosome stalling at specific amino acid sequence contexts. Binds between the exit (E) and peptidyl (P) site of the ribosome and promotes rescue of stalled ribosome: specifically required for efficient translation of polyproline-containing peptides as well as other motifs that stall the ribosome. Acts as a ribosome quality control (RQC) cofactor by joining the RQC complex to facilitate peptidyl transfer during CAT tailing step. The protein is Eukaryotic translation initiation factor 5A-2 (EIF-5A2) of Nicotiana plumbaginifolia (Leadwort-leaved tobacco).